The primary structure comprises 147 residues: Nitric oxide reductase subunit C (147 aa).

The helical; Signal-anchor transmembrane segment at 13-29 threads the bilayer; it reads VFYGGSLFFIAVFVGLT. Heme c-binding residues include Cys59, Cys62, and His63.

Heterodimer of cytochromes b (large subunit) and c (small subunit).

It is found in the cell membrane. Functionally, component of the anaerobic respiratory chain that transforms nitrate to dinitrogen (denitrification). The chain is Nitric oxide reductase subunit C (norC) from Cereibacter sphaeroides (strain ATCC 17025 / ATH 2.4.3) (Rhodobacter sphaeroides).